We begin with the raw amino-acid sequence, 432 residues long: Trigger factor (432 aa).

One can recognise a PPIase FKBP-type domain in the interval 163 to 248; sequence GDIAVIDFEG…LKALNKKELP (86 aa).

This sequence belongs to the FKBP-type PPIase family. Tig subfamily.

The protein resides in the cytoplasm. The catalysed reaction is [protein]-peptidylproline (omega=180) = [protein]-peptidylproline (omega=0). Involved in protein export. Acts as a chaperone by maintaining the newly synthesized protein in an open conformation. Functions as a peptidyl-prolyl cis-trans isomerase. This is Trigger factor from Caldanaerobacter subterraneus subsp. tengcongensis (strain DSM 15242 / JCM 11007 / NBRC 100824 / MB4) (Thermoanaerobacter tengcongensis).